A 323-amino-acid chain; its full sequence is tRNA U34 carboxymethyltransferase (323 aa).

Residues K91, W105, K110, G130, 152 to 154 (DPT), 181 to 182 (IE), M196, Y200, and R315 each bind carboxy-S-adenosyl-L-methionine.

The protein belongs to the class I-like SAM-binding methyltransferase superfamily. CmoB family. In terms of assembly, homotetramer.

It catalyses the reaction carboxy-S-adenosyl-L-methionine + 5-hydroxyuridine(34) in tRNA = 5-carboxymethoxyuridine(34) in tRNA + S-adenosyl-L-homocysteine + H(+). Catalyzes carboxymethyl transfer from carboxy-S-adenosyl-L-methionine (Cx-SAM) to 5-hydroxyuridine (ho5U) to form 5-carboxymethoxyuridine (cmo5U) at position 34 in tRNAs. In Escherichia coli O8 (strain IAI1), this protein is tRNA U34 carboxymethyltransferase.